Consider the following 355-residue polypeptide: MAGCCCLSAEEKESQRISAEIERQLRRDKKDARRELKLLLLGTGESGKSTFIKQMRIIHGSGYSDEDRKGFTKLVYQNIFTAMQAMIRAMDTLKIQYVCEQNKENAQLIREVEVDKVSTLSRDQVEAIKQLWQDPGIQECYDRRREYQLSDSAKYYLTDIDRIAMPAFVPTQQDVLRVRVPTTGIIEYPFDLENIIFRMVDVGGQRSERRKWIHCFESVTSIIFLVALSEYDQVLAECDNENRMEESKALFKTIITYPWFLNSSVILFLNKKDLLEEKIMYSHLISYFPEYTGPKQDVKAARDFILKLYQDQNPDKEKVIYSHFTCATDTENIRFVFAAVKDTILQLNLREFNLV.

Positions 34-355 (RELKLLLLGT…QLNLREFNLV (322 aa)) constitute a G-alpha domain. The tract at residues 37 to 50 (KLLLLGTGESGKST) is G1 motif. GTP-binding positions include 42–49 (GTGESGKS), 176–182 (LRVRVPT), 201–205 (DVGGQ), 270–273 (NKKD), and alanine 327. Mg(2+) is bound by residues serine 49 and threonine 182. Positions 174-182 (DVLRVRVPT) are G2 motif. Residues 197 to 206 (FRMVDVGGQR) are G3 motif. Residues 266 to 273 (ILFLNKKD) are G4 motif. The interval 325–330 (TCATDT) is G5 motif.

The protein belongs to the G-alpha family. G(q) subfamily. In terms of assembly, g proteins are composed of 3 units; alpha, beta and gamma. The alpha chain contains the guanine nucleotide binding site.

Guanine nucleotide-binding proteins (G proteins) are involved as modulators or transducers in various transmembrane signaling systems. This Bos taurus (Bovine) protein is Guanine nucleotide-binding protein subunit alpha-14 (GNA14).